We begin with the raw amino-acid sequence, 89 residues long: Small ribosomal subunit protein uS15 (89 aa).

It belongs to the universal ribosomal protein uS15 family. In terms of assembly, part of the 30S ribosomal subunit. Forms a bridge to the 50S subunit in the 70S ribosome, contacting the 23S rRNA.

Its function is as follows. One of the primary rRNA binding proteins, it binds directly to 16S rRNA where it helps nucleate assembly of the platform of the 30S subunit by binding and bridging several RNA helices of the 16S rRNA. Forms an intersubunit bridge (bridge B4) with the 23S rRNA of the 50S subunit in the ribosome. The polypeptide is Small ribosomal subunit protein uS15 (Pseudomonas fluorescens (strain ATCC BAA-477 / NRRL B-23932 / Pf-5)).